We begin with the raw amino-acid sequence, 691 residues long: Elongation factor G (691 aa).

Positions 8–282 (ERVRNIGIAA…AVVDYLPAPV (275 aa)) constitute a tr-type G domain. GTP-binding positions include 17-24 (AHIDAGKT), 81-85 (DTPGH), and 135-138 (NKMD).

This sequence belongs to the TRAFAC class translation factor GTPase superfamily. Classic translation factor GTPase family. EF-G/EF-2 subfamily.

It localises to the cytoplasm. Functionally, catalyzes the GTP-dependent ribosomal translocation step during translation elongation. During this step, the ribosome changes from the pre-translocational (PRE) to the post-translocational (POST) state as the newly formed A-site-bound peptidyl-tRNA and P-site-bound deacylated tRNA move to the P and E sites, respectively. Catalyzes the coordinated movement of the two tRNA molecules, the mRNA and conformational changes in the ribosome. This Prochlorococcus marinus (strain MIT 9515) protein is Elongation factor G.